We begin with the raw amino-acid sequence, 382 residues long: V-type proton ATPase subunit C 1 (382 aa).

N-acetylthreonine is present on Thr-2.

This sequence belongs to the V-ATPase C subunit family. V-ATPase is a heteromultimeric enzyme made up of two complexes: the ATP-hydrolytic V1 complex and the proton translocation V0 complex. The V1 complex consists of three catalytic AB heterodimers that form a heterohexamer, three peripheral stalks each consisting of EG heterodimers, one central rotor including subunits D and F, and the regulatory subunits C and H. The proton translocation complex V0 consists of the proton transport subunit a, a ring of proteolipid subunits c9c'', rotary subunit d, subunits e and f, and the accessory subunits ATP6AP1/Ac45 and ATP6AP2/PRR.

The protein resides in the cytoplasmic vesicle. It is found in the secretory vesicle. The protein localises to the synaptic vesicle membrane. It localises to the clathrin-coated vesicle membrane. Subunit of the V1 complex of vacuolar(H+)-ATPase (V-ATPase), a multisubunit enzyme composed of a peripheral complex (V1) that hydrolyzes ATP and a membrane integral complex (V0) that translocates protons. V-ATPase is responsible for acidifying and maintaining the pH of intracellular compartments and in some cell types, is targeted to the plasma membrane, where it is responsible for acidifying the extracellular environment. Subunit C is necessary for the assembly of the catalytic sector of the enzyme and is likely to have a specific function in its catalytic activity. This is V-type proton ATPase subunit C 1 (ATP6V1C1) from Macaca fascicularis (Crab-eating macaque).